The following is a 355-amino-acid chain: DNA polymerase IV (355 aa).

One can recognise a UmuC domain in the interval 7 to 188; that stretch reads IIHIDMDCFY…LPLSKIPGVG (182 aa). D11 and D106 together coordinate Mg(2+). E107 is an active-site residue.

Belongs to the DNA polymerase type-Y family. Monomer. Mg(2+) serves as cofactor.

Its subcellular location is the cytoplasm. The enzyme catalyses DNA(n) + a 2'-deoxyribonucleoside 5'-triphosphate = DNA(n+1) + diphosphate. In terms of biological role, poorly processive, error-prone DNA polymerase involved in untargeted mutagenesis. Copies undamaged DNA at stalled replication forks, which arise in vivo from mismatched or misaligned primer ends. These misaligned primers can be extended by PolIV. Exhibits no 3'-5' exonuclease (proofreading) activity. May be involved in translesional synthesis, in conjunction with the beta clamp from PolIII. The polypeptide is DNA polymerase IV (Mannheimia succiniciproducens (strain KCTC 0769BP / MBEL55E)).